The primary structure comprises 417 residues: Probable secreted beta-glucosidase PSU1 (417 aa).

The signal sequence occupies residues 1-18; it reads MRFFETLALALLTTGALA.

It belongs to the SUN family.

Its subcellular location is the secreted. It localises to the cell wall. Its function is as follows. Involved in cell wall synthesis. May be required for the activation of 1,3-beta-glucan synthase. The chain is Probable secreted beta-glucosidase PSU1 (psu1) from Schizosaccharomyces pombe (strain 972 / ATCC 24843) (Fission yeast).